A 59-amino-acid polypeptide reads, in one-letter code: Large ribosomal subunit protein uL30 (59 aa).

Belongs to the universal ribosomal protein uL30 family. Part of the 50S ribosomal subunit.

In Clostridium botulinum (strain Alaska E43 / Type E3), this protein is Large ribosomal subunit protein uL30.